The chain runs to 538 residues: Ubiquitin domain-containing protein DSK2a (538 aa).

Residues 18-93 enclose the Ubiquitin-like domain; sequence VAVNVRCSNG…VHMVRGFVPS (76 aa). The segment at 95–120 is disordered; that stretch reads PSAPAANAGNQTTAPQAVGSNDSSNL. The segment covering 102–119 has biased composition (polar residues); it reads AGNQTTAPQAVGSNDSSN. STI1 domains lie at 138–179 and 192–231; these read GNAM…QNLM and NPQMRELVDRNPELGHVLNDPSILRQTLEAARNPELMREM. Residues 289 to 316 form a disordered region; that stretch reads QGVTTQGSDTSNNISAPNAETGTPNANP. STI1 domains follow at residues 357–394 and 398–433; these read SPLGATPDASQLSQILQNPAMSQMMQSVLSNPQYMNQL and NPQLRSMLDMNPQLREMMQNPDFLRQFSSPEMMQQM. The 45-residue stretch at 491-535 folds into the UBA domain; the sequence is PPEERFATQLQQLQEMGFYDRAENIRALLATNGNVNAAVERLLGS.

Interacts with 'Lys-48'-linked polyubiquitin chains via its UBA domain. Interacts with RPN10 and RPN13. Interacts with PEX2 and PEX12. As to expression, ubiquitous with a strong expression level in inflorescence.

The protein localises to the nucleus. It localises to the cytoplasm. Its function is as follows. Binds and presumably selects ubiquitin-conjugates for destruction. Prefers multiubiquitin chains rather than single ubiquitins, with a binding affinity for 'Lys-48'-linked ubiquitin chains. Acts as a ubiquitin receptor that associates with the 26S proteasomal docking subunit RPN10 for the indirect recognition of ubiquitinated substrates of ubiquitin/26S proteasome-mediated proteolysis (UPP). This Arabidopsis thaliana (Mouse-ear cress) protein is Ubiquitin domain-containing protein DSK2a (DSK2A).